A 553-amino-acid chain; its full sequence is Putative transport protein YidE (553 aa).

Transmembrane regions (helical) follow at residues 4–24 (IALTVSVLALVAVVGLWIGNI), 28–48 (GVGFGIGGVLFGGIIVGHFVD), 65–85 (FGLILFVYTIGIQVGPGFFAS), 95–115 (LFAVLIVIMGGLVTAILHKIF), and 158–178 (MSYAMAYPFGICGILLTMWLM). 2 consecutive RCK C-terminal domains span residues 192–276 (KHES…VIGK) and 279–361 (DTSL…VVGN). A run of 5 helical transmembrane segments spans residues 371-391 (MLPVFIGIGLGVLLGSIPLFV), 403-425 (AGGPLIIALILGRIGSIGKLYWF), 437-457 (LGIVLFLAVVGLKSGGNFVNT), 464-484 (LSWIGYGIFITAIPLITVGLL), and 533-553 (LVMFLRIITPQLLAVIFWGIG).

This sequence belongs to the AAE transporter (TC 2.A.81) family. YidE subfamily.

It is found in the cell membrane. This Salmonella arizonae (strain ATCC BAA-731 / CDC346-86 / RSK2980) protein is Putative transport protein YidE.